The primary structure comprises 167 residues: Thioredoxin M-type, chloroplastic (167 aa).

The N-terminal 53 residues, 1 to 53, are a transit peptide targeting the chloroplast; that stretch reads MAMETCFRAWALHAPAGSKDRLLVGNLVLPSKRALAPLSVGRVATRRPRHVCQ. Residues 54-165 enclose the Thioredoxin domain; the sequence is SKNAVDEVVV…LTTLIDKYIG (112 aa). A disulfide bridge links cysteine 89 with cysteine 92.

It belongs to the thioredoxin family. Plant M-type subfamily. Forms a complex with heterodimeric ferredoxin-thioredoxin reductase (FTR) and ferredoxin.

It localises to the plastid. It is found in the chloroplast. Functionally, participates in various redox reactions through the reversible oxidation of the active center dithiol to a disulfide. The M form is known to activate NADP-malate dehydrogenase. The polypeptide is Thioredoxin M-type, chloroplastic (TRM1) (Zea mays (Maize)).